Reading from the N-terminus, the 306-residue chain is tRNA dimethylallyltransferase (306 aa).

14–21 (GPTAAGKS) contacts ATP. Position 16–21 (16–21 (TAAGKS)) interacts with substrate. The interval 39–42 (DSRL) is interaction with substrate tRNA.

The protein belongs to the IPP transferase family. In terms of assembly, monomer. Requires Mg(2+) as cofactor.

The catalysed reaction is adenosine(37) in tRNA + dimethylallyl diphosphate = N(6)-dimethylallyladenosine(37) in tRNA + diphosphate. Its function is as follows. Catalyzes the transfer of a dimethylallyl group onto the adenine at position 37 in tRNAs that read codons beginning with uridine, leading to the formation of N6-(dimethylallyl)adenosine (i(6)A). This chain is tRNA dimethylallyltransferase, found in Synechococcus elongatus (strain ATCC 33912 / PCC 7942 / FACHB-805) (Anacystis nidulans R2).